Here is a 583-residue protein sequence, read N- to C-terminus: 2-succinyl-5-enolpyruvyl-6-hydroxy-3-cyclohexene-1-carboxylate synthase (583 aa).

The protein belongs to the TPP enzyme family. MenD subfamily. In terms of assembly, homodimer. Mg(2+) is required as a cofactor. The cofactor is Mn(2+). It depends on thiamine diphosphate as a cofactor.

It carries out the reaction isochorismate + 2-oxoglutarate + H(+) = 5-enolpyruvoyl-6-hydroxy-2-succinyl-cyclohex-3-ene-1-carboxylate + CO2. It functions in the pathway quinol/quinone metabolism; 1,4-dihydroxy-2-naphthoate biosynthesis; 1,4-dihydroxy-2-naphthoate from chorismate: step 2/7. The protein operates within quinol/quinone metabolism; menaquinone biosynthesis. Functionally, catalyzes the thiamine diphosphate-dependent decarboxylation of 2-oxoglutarate and the subsequent addition of the resulting succinic semialdehyde-thiamine pyrophosphate anion to isochorismate to yield 2-succinyl-5-enolpyruvyl-6-hydroxy-3-cyclohexene-1-carboxylate (SEPHCHC). This chain is 2-succinyl-5-enolpyruvyl-6-hydroxy-3-cyclohexene-1-carboxylate synthase, found in Chlorobium luteolum (strain DSM 273 / BCRC 81028 / 2530) (Pelodictyon luteolum).